A 381-amino-acid chain; its full sequence is Homoserine O-succinyltransferase (381 aa).

An AB hydrolase-1 domain is found at 45–360 (NAVLVCHALN…PHGHDAFLLD (316 aa)). The active-site Nucleophile is the serine 151. Arginine 221 is a binding site for substrate. Catalysis depends on residues aspartate 321 and histidine 354. Aspartate 355 lines the substrate pocket.

The protein belongs to the AB hydrolase superfamily. MetX family. Homodimer.

The protein resides in the cytoplasm. It catalyses the reaction L-homoserine + succinyl-CoA = O-succinyl-L-homoserine + CoA. It functions in the pathway amino-acid biosynthesis; L-methionine biosynthesis via de novo pathway; O-succinyl-L-homoserine from L-homoserine: step 1/1. Functionally, transfers a succinyl group from succinyl-CoA to L-homoserine, forming succinyl-L-homoserine. The protein is Homoserine O-succinyltransferase of Paraburkholderia xenovorans (strain LB400).